The primary structure comprises 879 residues: Pyruvate dehydrogenase phosphatase regulatory subunit, mitochondrial (879 aa).

The transit peptide at 1–27 (MMFYRLLSIVGRQRASPGWQNWSSARN) directs the protein to the mitochondrion.

It belongs to the GcvT family. As to quaternary structure, heterodimer of a catalytic (PDP1) and a regulatory (PDPR) subunit.

The protein resides in the mitochondrion matrix. Its function is as follows. Decreases the sensitivity of PDP1 to magnesium ions, and this inhibition is reversed by the polyamine spermine. This chain is Pyruvate dehydrogenase phosphatase regulatory subunit, mitochondrial (PDPR), found in Homo sapiens (Human).